Here is a 247-residue protein sequence, read N- to C-terminus: Probable phosphatase Shew_1420 (247 aa).

Zn(2+)-binding residues include His8, His10, His16, His41, Glu74, His102, His132, Asp193, and His195.

This sequence belongs to the PHP family. Zn(2+) serves as cofactor.

The polypeptide is Probable phosphatase Shew_1420 (Shewanella loihica (strain ATCC BAA-1088 / PV-4)).